Reading from the N-terminus, the 321-residue chain is Protein-L-isoaspartate O-methyltransferase (321 aa).

Residues 21–31 (KPAERQREKRI) show a composition bias toward basic and acidic residues. A disordered region spans residues 21 to 65 (KPAERQREKRISSGVNAVSLPTPARTASAERASSTPAPGPGPQRV). The segment covering 41–56 (PTPARTASAERASSTP) has biased composition (low complexity). S153 is an active-site residue.

This sequence belongs to the methyltransferase superfamily. L-isoaspartyl/D-aspartyl protein methyltransferase family.

It is found in the cytoplasm. It carries out the reaction [protein]-L-isoaspartate + S-adenosyl-L-methionine = [protein]-L-isoaspartate alpha-methyl ester + S-adenosyl-L-homocysteine. Its function is as follows. Catalyzes the methyl esterification of L-isoaspartyl residues in peptides and proteins that result from spontaneous decomposition of normal L-aspartyl and L-asparaginyl residues. It plays a role in the repair and/or degradation of damaged proteins. In Ralstonia nicotianae (strain ATCC BAA-1114 / GMI1000) (Ralstonia solanacearum), this protein is Protein-L-isoaspartate O-methyltransferase.